The chain runs to 185 residues: Bcl-2-like protein 10 (185 aa).

The BH1 signature appears at 76-95 (LSNDQEFNWGRLVMLLAFVG). The BH2 motif lies at 138-149 (WLEAHGGWDGFC). A helical membrane pass occupies residues 160–182 (FWRRLLIRAILSCFFATAIFYIW).

Belongs to the Bcl-2 family. In terms of assembly, interacts with BAX. Interacts with BCL2, BCL2L1/BCLX. Interacts with APAF1. Interacts with ITPR1, ITPR2 and ITPR3; the interaction with ITPR1 is increased in the presence of AHCLY1. Interacts with AHCYL1. Interacts with HIP1R (via ENTH and I/LWEQ domains). Interacts with CASP9. Interacts with BCL2L11/BIM. Interacts with BIK. Interacts with UBQLN4. Interacts with NME2/NM23-H2. Interacts with and PMAIP1/NOXA. Interacts with TPX2. Interacts with UBQLN1; in the cytoplasm. Interacts (via BH1 domain) with BECN1. It depends on Ca(2+) as a cofactor. Post-translationally, monoubiquitinated by UBQLN1; results in stabilization of BCL2L10 protein abundance and in relocalization from mitochondria to cytoplasm. Expressed in oligodendroglial lineage cells.

The protein resides in the mitochondrion. It localises to the nucleus membrane. The protein localises to the endoplasmic reticulum. Its subcellular location is the cytoplasm. It is found in the cytoskeleton. The protein resides in the spindle. In terms of biological role, promotes cell survival by suppressing apoptosis induced by BAX but not BAK. Increases binding of AHCYL1/IRBIT to ITPR1. Reduces ITPR1-mediated calcium release from the endoplasmic reticulum cooperatively with AHCYL1/IRBIT under normal cellular conditions. Under apoptotic stress conditions, dissociates from ITPR1 and is displaced from mitochondria-associated endoplasmic reticulum membranes, leading to increased Ca(2+) transfer to mitochondria which promotes apoptosis. Required for the correct formation of the microtubule organizing center during oocyte cell division, potentially via regulation of protein abundance and localization of other microtubule organizing center components such as AURKA and TPX2. This is Bcl-2-like protein 10 from Rattus norvegicus (Rat).